We begin with the raw amino-acid sequence, 147 residues long: Large ribosomal subunit protein uL13 (147 aa).

This sequence belongs to the universal ribosomal protein uL13 family. Part of the 50S ribosomal subunit.

In terms of biological role, this protein is one of the early assembly proteins of the 50S ribosomal subunit, although it is not seen to bind rRNA by itself. It is important during the early stages of 50S assembly. This chain is Large ribosomal subunit protein uL13, found in Deinococcus geothermalis (strain DSM 11300 / CIP 105573 / AG-3a).